The following is a 277-amino-acid chain: 3-methyl-2-oxobutanoate hydroxymethyltransferase (277 aa).

Mg(2+) is bound by residues D42 and D81. Residues 42–43, D81, and K110 contribute to the 3-methyl-2-oxobutanoate site; that span reads DS. E112 contributes to the Mg(2+) binding site. The active-site Proton acceptor is E179.

The protein belongs to the PanB family. As to quaternary structure, homodecamer; pentamer of dimers. The cofactor is Mg(2+).

The protein resides in the cytoplasm. The enzyme catalyses 3-methyl-2-oxobutanoate + (6R)-5,10-methylene-5,6,7,8-tetrahydrofolate + H2O = 2-dehydropantoate + (6S)-5,6,7,8-tetrahydrofolate. It functions in the pathway cofactor biosynthesis; (R)-pantothenate biosynthesis; (R)-pantoate from 3-methyl-2-oxobutanoate: step 1/2. In terms of biological role, catalyzes the reversible reaction in which hydroxymethyl group from 5,10-methylenetetrahydrofolate is transferred onto alpha-ketoisovalerate to form ketopantoate. The chain is 3-methyl-2-oxobutanoate hydroxymethyltransferase from Anaplasma marginale (strain Florida).